The chain runs to 449 residues: tRNA-2-methylthio-N(6)-dimethylallyladenosine synthase (449 aa).

An MTTase N-terminal domain is found at 2–119; that stretch reads KGLFIRTYGC…LPEMIARASR (118 aa). Positions 11, 47, 82, 157, 161, and 164 each coordinate [4Fe-4S] cluster. The Radical SAM core domain maps to 143–378; that stretch reads EADGPAAFVS…QALLREQQTE (236 aa). The TRAM domain maps to 381–443; the sequence is ASQIGKTLPV…LNSLTGELVR (63 aa).

The protein belongs to the methylthiotransferase family. MiaB subfamily. In terms of assembly, monomer. [4Fe-4S] cluster serves as cofactor.

The protein localises to the cytoplasm. The catalysed reaction is N(6)-dimethylallyladenosine(37) in tRNA + (sulfur carrier)-SH + AH2 + 2 S-adenosyl-L-methionine = 2-methylsulfanyl-N(6)-dimethylallyladenosine(37) in tRNA + (sulfur carrier)-H + 5'-deoxyadenosine + L-methionine + A + S-adenosyl-L-homocysteine + 2 H(+). Catalyzes the methylthiolation of N6-(dimethylallyl)adenosine (i(6)A), leading to the formation of 2-methylthio-N6-(dimethylallyl)adenosine (ms(2)i(6)A) at position 37 in tRNAs that read codons beginning with uridine. The sequence is that of tRNA-2-methylthio-N(6)-dimethylallyladenosine synthase from Hyphomonas neptunium (strain ATCC 15444).